Consider the following 270-residue polypeptide: Phosphonates import ATP-binding protein PhnC (270 aa).

The ABC transporter domain occupies Leu2–Ala245. Gly34–Ser41 is an ATP binding site.

Belongs to the ABC transporter superfamily. Phosphonates importer (TC 3.A.1.9.1) family. The complex is composed of two ATP-binding proteins (PhnC), two transmembrane proteins (PhnE) and a solute-binding protein (PhnD).

It is found in the cell inner membrane. It carries out the reaction phosphonate(out) + ATP + H2O = phosphonate(in) + ADP + phosphate + H(+). Functionally, part of the ABC transporter complex PhnCDE involved in phosphonates import. Responsible for energy coupling to the transport system. This is Phosphonates import ATP-binding protein PhnC from Rhodopseudomonas palustris (strain BisB5).